Consider the following 147-residue polypeptide: Large ribosomal subunit protein bL9 (147 aa).

Belongs to the bacterial ribosomal protein bL9 family.

Its function is as follows. Binds to the 23S rRNA. The chain is Large ribosomal subunit protein bL9 from Natranaerobius thermophilus (strain ATCC BAA-1301 / DSM 18059 / JW/NM-WN-LF).